A 275-amino-acid polypeptide reads, in one-letter code: Probable ABC transporter permease protein PH1216 (275 aa).

Helical transmembrane passes span 10-30, 73-93, 105-125, 137-157, 181-203, and 241-261; these read LLYIVLIFLAAWYLLPIWSAI, IFTTFATIFSTILGSIAGFTI, LLALISFGIFLPYQSILIPLV, ILGLILTHTAYGIPITTLLFT, IYTKVILPLSKAPFVVTGIYQFT, and IQMAGALIVALPTLLIMIALG. The ABC transmembrane type-1 domain occupies 68-260; sequence ILNSLIFTTF…LPTLLIMIAL (193 aa).

The protein belongs to the binding-protein-dependent transport system permease family. MalFG subfamily.

The protein resides in the cell membrane. Probably part of a binding-protein-dependent transport system PH1214/15/16. Probably responsible for the translocation of the substrate across the membrane. This is Probable ABC transporter permease protein PH1216 from Pyrococcus horikoshii (strain ATCC 700860 / DSM 12428 / JCM 9974 / NBRC 100139 / OT-3).